The following is a 749-amino-acid chain: Photosystem I P700 chlorophyll a apoprotein A1 (749 aa).

8 helical membrane passes run 70 to 93, 156 to 179, 195 to 219, 291 to 309, 346 to 369, 385 to 411, 433 to 455, and 531 to 549; these read VFSA…FHGA, LYAT…FHYH, LNHH…HVSL, TAHH…GHMY, WHAQ…HHMY, LSLF…IFLV, AIIS…LYIH, and FLVH…LILL. The [4Fe-4S] cluster site is built by C573 and C582. The next 2 membrane-spanning stretches (helical) occupy residues 589-610 and 663-685; these read HVFL…HFSW and LSAY…MFLF. H674 is a chlorophyll a' binding site. Residues M682 and Y690 each coordinate chlorophyll a. W691 is a phylloquinone binding site. The helical transmembrane segment at 723–743 threads the bilayer; the sequence is AVGVAHYLLGGIATTWAFFLA.

The protein belongs to the PsaA/PsaB family. The PsaA/B heterodimer binds the P700 chlorophyll special pair and subsequent electron acceptors. PSI consists of a core antenna complex that captures photons, and an electron transfer chain that converts photonic excitation into a charge separation. The eukaryotic PSI reaction center is composed of at least 11 subunits. P700 is a chlorophyll a/chlorophyll a' dimer, A0 is one or more chlorophyll a, A1 is one or both phylloquinones and FX is a shared 4Fe-4S iron-sulfur center. serves as cofactor.

It is found in the plastid. The protein resides in the chloroplast thylakoid membrane. The enzyme catalyses reduced [plastocyanin] + hnu + oxidized [2Fe-2S]-[ferredoxin] = oxidized [plastocyanin] + reduced [2Fe-2S]-[ferredoxin]. In terms of biological role, psaA and PsaB bind P700, the primary electron donor of photosystem I (PSI), as well as the electron acceptors A0, A1 and FX. PSI is a plastocyanin-ferredoxin oxidoreductase, converting photonic excitation into a charge separation, which transfers an electron from the donor P700 chlorophyll pair to the spectroscopically characterized acceptors A0, A1, FX, FA and FB in turn. Oxidized P700 is reduced on the lumenal side of the thylakoid membrane by plastocyanin. The protein is Photosystem I P700 chlorophyll a apoprotein A1 of Zygnema circumcarinatum (Green alga).